Here is a 1002-residue protein sequence, read N- to C-terminus: Carboxypeptidase Y (1002 aa).

The N-terminal stretch at 1–18 is a signal peptide; the sequence is MLMKQTFLYFLLTCVVSA. Residues 19 to 521 constitute a propeptide that is removed on maturation; sequence QFNGYVPPEQ…AYLEMLKAEG (503 aa). 3 disordered regions span residues 51 to 91, 124 to 436, and 527 to 546; these read QEES…TALE, DEDE…NMQS, and AFRDQSHPAKPSNAQPADSS. Basic and acidic residues-rich tracts occupy residues 63-81 and 127-143; these read PERDEAEAPHHPKGHHEFN and EHVREKRPHDSADEDAP. The span at 144–170 shows a compositional bias: basic residues; the sequence is RRKHGKCKGKGKHHKGKHAKGKGKKSH. Residues 171–205 show a composition bias toward basic and acidic residues; sequence PKPEDDSVFFDDERPKHHEFDDEDREFPAHHEPGE. A run of 15 repeats spans residues 225 to 237, 238 to 250, 251 to 263, 264 to 276, 277 to 289, 290 to 302, 303 to 315, 316 to 328, 329 to 341, 361 to 369, 370 to 378, 379 to 387, 388 to 396, 397 to 405, and 406 to 414. Residues 225–341 are 9 X 13 AA tandem repeats of M-H-H-E-P-G-E-H-M-P-P-P-P; sequence MHHEPGEHMP…EPGEHMPPPP (117 aa). Basic and acidic residues predominate over residues 343–431; sequence KHHELEEHEG…PKEKHNERPE (89 aa). A 7 X 9 AA tandem repeats of D-K-E-H-H-K-G-P-K region spans residues 361–423; that stretch reads DKEHHKGPKD…KDKEHHQGPK (63 aa). The stretch at 415–423 is one 2-7; approximate repeat; that stretch reads DKEHHQGPK. 5 disulfide bridges follow: cysteine 627–cysteine 880, cysteine 776–cysteine 789, cysteine 799–cysteine 822, cysteine 806–cysteine 815, and cysteine 844–cysteine 851. Residue asparagine 659 is glycosylated (N-linked (GlcNAc...) asparagine). Serine 715 is a catalytic residue. Aspartate 921 is an active-site residue. A substrate-binding site is contributed by cysteine 924. Residue histidine 978 is part of the active site. Methionine 979 is a substrate binding site.

This sequence belongs to the peptidase S10 family. As to quaternary structure, heterodimer of two subunits of 32 kDa and 19 kDa derived from the precursor protein and linked by a disulfide bond.

The protein localises to the vacuole. The enzyme catalyses Release of a C-terminal amino acid with broad specificity.. Functionally, involved in degradation of small peptides. Digests preferentially peptides containing an aliphatic or hydrophobic residue in P1' position, as well as methionine, leucine or phenylalanine in P1 position of ester substrate. This is Carboxypeptidase Y (cpy1) from Schizosaccharomyces pombe (strain 972 / ATCC 24843) (Fission yeast).